We begin with the raw amino-acid sequence, 192 residues long: Mitochondrial import inner membrane translocase subunit TIM18 (192 aa).

A mitochondrion-targeting transit peptide spans 1-42 (MLLFPGLKPVLNASTVIVNPVRAVFPGLVLSTKRSFYSINRL). Topologically, residues 43–88 (NAENKINDIANTSKEASSSVQMFKPPEFSQFKDSYQKDYERIAKYT) are mitochondrial matrix. Residues 89 to 109 (LIPLTMVPFYASFTGGVINPL) traverse the membrane as a helical segment. Residues 110–113 (LDAS) lie on the Mitochondrial intermembrane side of the membrane. The helical transmembrane segment at 114-134 (LSSIFLIYLQYGFTSCIIDYI) threads the bilayer. Residues 135 to 144 (PKEKYPRWHK) are Mitochondrial matrix-facing. The helical transmembrane segment at 145–165 (LALYCLYGGSMLSLYGIYELE) threads the bilayer. The Mitochondrial intermembrane segment spans residues 166-192 (TKNNGFVDLVKKLWNENDDHLYIFGRN).

The protein belongs to the CybS family. Component of the TIM22 complex, whose core is composed of TIM18, TIM22 and TIM54, associated with the peripheral proteins MRS5/TIM12 and the 70 kDa heterohexamer composed of TIM9 and TIM10 (or TIM8 and TIM13).

The protein resides in the mitochondrion inner membrane. Functionally, component of the TIM22 complex, a complex that mediates the import and insertion of multi-pass transmembrane proteins into the mitochondrial inner membrane. The TIM22 complex forms a twin-pore translocase that uses the membrane potential as external driving force. Its role in the complex is unclear but it may be involved in the assembly and stabilization of the TIM22 complex. This is Mitochondrial import inner membrane translocase subunit TIM18 (TIM18) from Saccharomyces cerevisiae (strain ATCC 204508 / S288c) (Baker's yeast).